The primary structure comprises 247 residues: Adenosylcobinamide-GDP ribazoletransferase (247 aa).

5 consecutive transmembrane segments (helical) span residues 34-54, 57-77, 113-133, 138-158, and 194-214; these read IITFPLIGLLLGAISGLVFMV, AWCGAPLAALFSVLVLALMTG, GGLALIFVVLAKILVLSELAL, ILASLAAACAVSRGTAALLMY, and VLLLGMHGVAAMVVTMVAIFI.

The protein belongs to the CobS family. Mg(2+) is required as a cofactor.

Its subcellular location is the cell inner membrane. The enzyme catalyses alpha-ribazole + adenosylcob(III)inamide-GDP = adenosylcob(III)alamin + GMP + H(+). The catalysed reaction is alpha-ribazole 5'-phosphate + adenosylcob(III)inamide-GDP = adenosylcob(III)alamin 5'-phosphate + GMP + H(+). The protein operates within cofactor biosynthesis; adenosylcobalamin biosynthesis; adenosylcobalamin from cob(II)yrinate a,c-diamide: step 7/7. Joins adenosylcobinamide-GDP and alpha-ribazole to generate adenosylcobalamin (Ado-cobalamin). Also synthesizes adenosylcobalamin 5'-phosphate from adenosylcobinamide-GDP and alpha-ribazole 5'-phosphate. This Shigella flexneri protein is Adenosylcobinamide-GDP ribazoletransferase.